The following is a 261-amino-acid chain: Indole-3-glycerol phosphate synthase (261 aa).

It belongs to the TrpC family.

The enzyme catalyses 1-(2-carboxyphenylamino)-1-deoxy-D-ribulose 5-phosphate + H(+) = (1S,2R)-1-C-(indol-3-yl)glycerol 3-phosphate + CO2 + H2O. It functions in the pathway amino-acid biosynthesis; L-tryptophan biosynthesis; L-tryptophan from chorismate: step 4/5. The chain is Indole-3-glycerol phosphate synthase from Burkholderia lata (strain ATCC 17760 / DSM 23089 / LMG 22485 / NCIMB 9086 / R18194 / 383).